Reading from the N-terminus, the 155-residue chain is Cytochrome c-type biogenesis protein CcmE (155 aa).

At 1-8 (MNPVRKRR) the chain is on the cytoplasmic side. A helical; Signal-anchor for type II membrane protein membrane pass occupies residues 9 to 29 (LFIVLAILAGVGAAVALALSA). Over 30 to 155 (LQQNINLFYT…YENGKPGGAQ (126 aa)) the chain is Periplasmic. Heme is bound by residues H124 and Y128.

Belongs to the CcmE/CycJ family.

The protein resides in the cell inner membrane. Heme chaperone required for the biogenesis of c-type cytochromes. Transiently binds heme delivered by CcmC and transfers the heme to apo-cytochromes in a process facilitated by CcmF and CcmH. The chain is Cytochrome c-type biogenesis protein CcmE from Azotobacter vinelandii (strain DJ / ATCC BAA-1303).